The following is a 279-amino-acid chain: MDKIKIITDSTCDLSKEIIEKYDIDVMPMLINFGEESYLDGVEIKVDSMMERIEREDTLPTTAQIVPTRFIEKYKGYLEEGYKVISIHISSNMSGTYQSACLAKTELESDDIVVIDSRNVTVGLGLIILKAARLIESGITLEDLEKEILEYRNHIKSTIAFESLDNLVRGGRLSKGKALFVSALGIKLMLNVLDGEMNVQGKIRGTKKMVKAMIEQFDSIPKKEGEPIILVELENEDIYLPIKEYLENNNIEYLKLPLGCSVAIHSGPKVCALFYVEEY.

A DegV domain is found at 4–277 (IKIITDSTCD…PKVCALFYVE (274 aa)). T62 and S94 together coordinate hexadecanoate.

In terms of biological role, may bind long-chain fatty acids, such as palmitate, and may play a role in lipid transport or fatty acid metabolism. This chain is DegV domain-containing protein CPE1310, found in Clostridium perfringens (strain 13 / Type A).